The primary structure comprises 499 residues: BTB/POZ domain-containing protein At5g60050 (499 aa).

The segment covering proline 18–proline 30 has biased composition (low complexity). The segment at proline 18–threonine 57 is disordered. The segment covering proline 38–asparagine 49 has biased composition (pro residues). A BTB domain is found at glycine 99–leucine 172.

It functions in the pathway protein modification; protein ubiquitination. Functionally, may act as a substrate-specific adapter of an E3 ubiquitin-protein ligase complex (CUL3-RBX1-BTB) which mediates the ubiquitination and subsequent proteasomal degradation of target proteins. The protein is BTB/POZ domain-containing protein At5g60050 of Arabidopsis thaliana (Mouse-ear cress).